The sequence spans 229 residues: MPTPNQTNFQDAASPLMEELTHFHDHTLMIVFMISLLVLYILLSMLSTKLTHTNTANAQQAEMVWTILPAIILITIALPSLQILYMMDEINKPHMTIKAIGHQWYWTYEYTDYKELEFNSYMIQTQDLPLGHMRLLEVDHRMVTPLESYIRMLISADDVLHSWAIPSLGLKTDAVPGRINQAVFIIMQAGIFYGQCSEICGANHSFMPVVVESLPMNHFDLWLAMIDTL.

Residues 1-14 (MPTPNQTNFQDAAS) lie on the Mitochondrial intermembrane side of the membrane. Residues 15–45 (PLMEELTHFHDHTLMIVFMISLLVLYILLSM) form a helical membrane-spanning segment. Residues 46 to 59 (LSTKLTHTNTANAQ) lie on the Mitochondrial matrix side of the membrane. A helical membrane pass occupies residues 60–87 (QAEMVWTILPAIILITIALPSLQILYMM). Topologically, residues 88-229 (DEINKPHMTI…DLWLAMIDTL (142 aa)) are mitochondrial intermembrane. Cu cation contacts are provided by His-161, Cys-196, Glu-198, Cys-200, His-204, and Met-207. Glu-198 lines the Mg(2+) pocket.

The protein belongs to the cytochrome c oxidase subunit 2 family. In terms of assembly, component of the cytochrome c oxidase (complex IV, CIV), a multisubunit enzyme composed of 14 subunits. The complex is composed of a catalytic core of 3 subunits MT-CO1, MT-CO2 and MT-CO3, encoded in the mitochondrial DNA, and 11 supernumerary subunits COX4I, COX5A, COX5B, COX6A, COX6B, COX6C, COX7A, COX7B, COX7C, COX8 and NDUFA4, which are encoded in the nuclear genome. The complex exists as a monomer or a dimer and forms supercomplexes (SCs) in the inner mitochondrial membrane with NADH-ubiquinone oxidoreductase (complex I, CI) and ubiquinol-cytochrome c oxidoreductase (cytochrome b-c1 complex, complex III, CIII), resulting in different assemblies (supercomplex SCI(1)III(2)IV(1) and megacomplex MCI(2)III(2)IV(2)). Found in a complex with TMEM177, COA6, COX18, COX20, SCO1 and SCO2. Interacts with TMEM177 in a COX20-dependent manner. Interacts with COX20. Interacts with COX16. The cofactor is Cu cation.

It is found in the mitochondrion inner membrane. The enzyme catalyses 4 Fe(II)-[cytochrome c] + O2 + 8 H(+)(in) = 4 Fe(III)-[cytochrome c] + 2 H2O + 4 H(+)(out). Functionally, component of the cytochrome c oxidase, the last enzyme in the mitochondrial electron transport chain which drives oxidative phosphorylation. The respiratory chain contains 3 multisubunit complexes succinate dehydrogenase (complex II, CII), ubiquinol-cytochrome c oxidoreductase (cytochrome b-c1 complex, complex III, CIII) and cytochrome c oxidase (complex IV, CIV), that cooperate to transfer electrons derived from NADH and succinate to molecular oxygen, creating an electrochemical gradient over the inner membrane that drives transmembrane transport and the ATP synthase. Cytochrome c oxidase is the component of the respiratory chain that catalyzes the reduction of oxygen to water. Electrons originating from reduced cytochrome c in the intermembrane space (IMS) are transferred via the dinuclear copper A center (CU(A)) of subunit 2 and heme A of subunit 1 to the active site in subunit 1, a binuclear center (BNC) formed by heme A3 and copper B (CU(B)). The BNC reduces molecular oxygen to 2 water molecules using 4 electrons from cytochrome c in the IMS and 4 protons from the mitochondrial matrix. The polypeptide is Cytochrome c oxidase subunit 2 (MT-CO2) (Pelomedusa subrufa (African side-necked turtle)).